Consider the following 1746-residue polypeptide: MNDLNLRVAALKVCAHPKRFAELRDALVPLPNTWIAAPHDFVLQFAAAKSSAEQVQVVKDVFYGEQAQDHEDVAHFLADLLLASPLKHAVRNQLTKLFSDNALAKQNASPHRRHSKEHLLEALQQSLGEMANSLAVITPPVSHERTNDVFVSANACLQNFPFGREALGKQVHRFAPLLTTALERYWADICDPTLELSPTRRNELYLYVQNALRFLVSLLAEWSDKLRLFEDQRFPGTSNAVAQKVARYYDTPWDVRSIAALLIGHLARFSGTFKAYVEDCSRPKAEQDVPIQMAALLVLRPVDYTENATLALAILKRIVAVSELKSTVTNLLVFLSKHLFIYSKSLGEMHAHLPDDQKLLYQRILAQLQVFALQNISSDTDSVRHMSSALLHQVLQHAQAAGQEELFQVVYRQFEDRAAYLNASCMALEQLVAVAGVSKSIENCPSLFGVIFPRHLGCEDCVDALFKAMMVSAHKTEPFAEWQSRWFGLLLAAIRVPEKRRQVIEELIAQAVQLEPTRLAQVLLPDDRLPLSCKLAAILGVRQLSARRQNLLRGMKEEVEQALIGLDDHTRLLALRFLVETPRPSELLNADQMGAIELYVRHNANNPSAHLRQLGYGLLQKALKRVHFGLVEYRKSRTPASQEVLQFLIRLIRTLAQNLFPTANYGRRWLSLRLLRDCLELSEMVGITFSELGIELPTEALMACLGDSYEHNKVLAAQLLERFQSHSLFKPDEMIELLLSLRPSDSATGAFQLQVYCKASRVQSEMPTPTHGGTIHEPLTFRALQWCLQHLREGLRLAQLDLGEAAKLNPLYGLLFASRHLLQQLKLKELAKEPQWRQYIDELVTMCLAVSSVVLPVVSSASPEGHLPETCDQETDQPLTNVLDRQLSREELLQVRTTPQMILLCAWRSSKEVCLILGELVQRAPLEEEEDEEQQQQQGDFLLSRAQLEAIGEHFLQLLAETKHRGAFEQAYVGFTMLCRRFWHSESVRLNQLPGQWVDEAMAMVSGQEEWAGKGARLCATRRSAGMPFMLQALVGTELKLGTHATLYRCMNRLLEVCERRTGGAAGITARSHALNIMRALFRSSELAELVTEFMARGIQCALDGLLLAEEWAERNSATLLLAALIVRVFGVERARLETGELHVRNRMTGRIFFTRYPQLFDYFHAALQRESEQMDAGGGGSENASGKRRQAVQLEAMLLMLSRLYPSSLEGAESTLNLSEFVPFLIRICHSHDLMTREMAALVVANFVTQEQALAEIRRIVVELKALQLRLKNTEAANTKLNTNVLHGQLLLLLHLHRLVRWTRPSLTRMQLHTLAELAAPLLQHDACAFSALVAVMVAAMEDAVEPGLLDFQLLEQIGVVYLLNHKEVQSRCQQLGISNRFYQIFGLHLHRLRGISQGIVLHIVEDLAETIWALDELKVELWLYILLQRSLSEQNSLVSEQDIEHFEFSRDIRRYFETLSREQREEVGQELYESPAVRSSVLHMMHMIKSSKNSCWSLQLAGRLAALQTLLRDPGLELNQLVQRCSEEHSTHQEAGLLLGLRRLIGESKMLERKHWLPMLNYAQRLVHPGQPVYLRHQAAELCDSLARNHLRDQLVAGTTDVDIGLVGRFSGLVLLLLHDDAEWVRHRAVQLVCGAGLRTRSGAGQEQEQSAMAPLILPSALIPPFLDTMIGKLTFDDFNMVQRLVDIIAEPFTTADAMELFDKQENNHYCERNHVLTELWDARGRADPRARTPTIPTGYQIFK.

A coiled-coil region spans residues 1252-1286 (EQALAEIRRIVVELKALQLRLKNTEAANTKLNTNV).

Belongs to the THADA family. As to quaternary structure, interacts with SERCA. As to expression, detected in the larval fat body, salivary glands and wing imaginal disks (at protein level).

The protein resides in the endoplasmic reticulum. Functionally, together with methyltransferase Trm7-32, methylates the 2'-O-ribose of nucleotides at position 32 of the anticodon loop of substrate tRNAs. Plays a key role in energy homeostasis by regulating the balance between energy storage and heat production. Functions by negatively regulating Ca(2+) signaling pathways that are involved in heat production and maintaining correct lipid storage in the fat body. Regulates Ca(2+) signaling pathways by reducing the activity of the calcium-transporting ATPase SERCA possibly by promoting uncoupling of SERCA ATP hydrolysis from calcium pumping. May also function in the nervous system to control feeding behavior. This is tRNA (32-2'-O)-methyltransferase regulator THADA from Drosophila melanogaster (Fruit fly).